A 498-amino-acid chain; its full sequence is ATP synthase subunit beta, chloroplastic (498 aa).

ATP is bound at residue glycine 172–threonine 179.

This sequence belongs to the ATPase alpha/beta chains family. In terms of assembly, F-type ATPases have 2 components, CF(1) - the catalytic core - and CF(0) - the membrane proton channel. CF(1) has five subunits: alpha(3), beta(3), gamma(1), delta(1), epsilon(1). CF(0) has four main subunits: a(1), b(1), b'(1) and c(9-12).

The protein resides in the plastid. It localises to the chloroplast thylakoid membrane. The enzyme catalyses ATP + H2O + 4 H(+)(in) = ADP + phosphate + 5 H(+)(out). Its function is as follows. Produces ATP from ADP in the presence of a proton gradient across the membrane. The catalytic sites are hosted primarily by the beta subunits. The sequence is that of ATP synthase subunit beta, chloroplastic from Nicotiana bigelovii (Bigelov's tobacco).